Here is a 659-residue protein sequence, read N- to C-terminus: Nitrate import ATP-binding protein NrtC (659 aa).

The region spanning 5 to 239 (LAVDHVHQVF…RPRQRLEMME (235 aa)) is the ABC transporter domain. Residue 42 to 49 (GHSGCGKS) coordinates ATP. The tract at residues 255–278 (QQQRRAKRRAKAAAPAPAVAASQQ) is linker. A nrtA-like region spans residues 279-659 (KTVRLGFLPG…VAPIPLATSA (381 aa)).

Belongs to the ABC transporter superfamily. Nitrate/nitrite/cyanate uptake transporter (NitT) (TC 3.A.1.16) family. In terms of assembly, the complex is composed of two ATP-binding proteins (NrtC and NrtD), two transmembrane proteins (NrtB) and a solute-binding protein (NrtA).

The protein resides in the cell inner membrane. It catalyses the reaction nitrate(out) + ATP + H2O = nitrate(in) + ADP + phosphate + H(+). Its activity is regulated as follows. Transport is inhibited by ammonium. The C-terminal domain of NrtC is involved in the ammonium-promoted inhibition of the nitrate/nitrite transporter. Its function is as follows. Part of the ABC transporter complex NrtABCD involved in nitrate uptake. The complex is probably also involved in nitrite transport. Probably responsible for energy coupling to the transport system. This chain is Nitrate import ATP-binding protein NrtC, found in Synechococcus elongatus (strain ATCC 33912 / PCC 7942 / FACHB-805) (Anacystis nidulans R2).